Reading from the N-terminus, the 329-residue chain is MKIAVIGAGAWGTTLANTLAKKGHNTHLWVREQELCDEITNTGYNSVFLPDFKLSPDLKCSSNPQQVMEGADYFLLVVPSQFLRSALADMKQYFPQNPAVVCASKGIELNTGAPMSQVVFESLEGLNPRFAHLSGPTFAYELSAELPTSIVLGCGDEKLAAEVQDIFSTPYLRIYTNPDYRGVELGGAIKNIMAIAAGMADGLKFGHNTRAALITRGIAEMSRLGEAMGAQASTFMGLSGMGDLVLTCTGDLSRNRQVGLKLGQGMKLNEILKMRMVAEGVKTTESVYFLAKKLGVELPITEQVYKILYEDKDPATAVCDLMNRDLKAE.

Residues Trp-11, Arg-31, and Lys-105 each coordinate NADPH. Residues Lys-105, Gly-135, and Thr-137 each contribute to the sn-glycerol 3-phosphate site. Ala-139 serves as a coordination point for NADPH. Sn-glycerol 3-phosphate contacts are provided by Lys-190, Asp-243, Ser-253, Arg-254, and Asn-255. The active-site Proton acceptor is Lys-190. Arg-254 serves as a coordination point for NADPH. NADPH contacts are provided by Val-277 and Glu-279.

This sequence belongs to the NAD-dependent glycerol-3-phosphate dehydrogenase family.

The protein resides in the cytoplasm. The catalysed reaction is sn-glycerol 3-phosphate + NAD(+) = dihydroxyacetone phosphate + NADH + H(+). It carries out the reaction sn-glycerol 3-phosphate + NADP(+) = dihydroxyacetone phosphate + NADPH + H(+). It functions in the pathway membrane lipid metabolism; glycerophospholipid metabolism. In terms of biological role, catalyzes the reduction of the glycolytic intermediate dihydroxyacetone phosphate (DHAP) to sn-glycerol 3-phosphate (G3P), the key precursor for phospholipid synthesis. This is Glycerol-3-phosphate dehydrogenase [NAD(P)+] from Maridesulfovibrio salexigens (strain ATCC 14822 / DSM 2638 / NCIMB 8403 / VKM B-1763) (Desulfovibrio salexigens).